The primary structure comprises 433 residues: ACT domain-containing protein ACR6 (433 aa).

4 consecutive ACT domains span residues 30 to 110 (VIQV…RSSV), 120 to 207 (SIEL…SCSD), 250 to 326 (VVTM…ASEG), and 328 to 402 (ELEL…VKKK).

Its function is as follows. May bind amino acids. The sequence is that of ACT domain-containing protein ACR6 from Arabidopsis thaliana (Mouse-ear cress).